A 513-amino-acid chain; its full sequence is Putative thymidine phosphorylase (513 aa).

The protein belongs to the thymidine/pyrimidine-nucleoside phosphorylase family. Type 2 subfamily.

The catalysed reaction is thymidine + phosphate = 2-deoxy-alpha-D-ribose 1-phosphate + thymine. The polypeptide is Putative thymidine phosphorylase (Bradyrhizobium diazoefficiens (strain JCM 10833 / BCRC 13528 / IAM 13628 / NBRC 14792 / USDA 110)).